A 708-amino-acid polypeptide reads, in one-letter code: Polyribonucleotide nucleotidyltransferase (708 aa).

Mg(2+) is bound by residues D488 and D494. The region spanning 555-614 (PRIYTMKIPQKKIAEVIGKGGATIRQLTEETGTTIEIGDDGTIKIAATDGESAANAISRI) is the KH domain. In terms of domain architecture, S1 motif spans 624 to 692 (GTIYEGKVVR…RQGRVRLSIK (69 aa)).

It belongs to the polyribonucleotide nucleotidyltransferase family. As to quaternary structure, component of the RNA degradosome, which is a multiprotein complex involved in RNA processing and mRNA degradation. It depends on Mg(2+) as a cofactor.

Its subcellular location is the cytoplasm. The catalysed reaction is RNA(n+1) + phosphate = RNA(n) + a ribonucleoside 5'-diphosphate. Its function is as follows. Involved in mRNA degradation. Catalyzes the phosphorolysis of single-stranded polyribonucleotides processively in the 3'- to 5'-direction. This Pseudoalteromonas translucida (strain TAC 125) protein is Polyribonucleotide nucleotidyltransferase.